We begin with the raw amino-acid sequence, 836 residues long: Protein O-mannosyl-transferase TMTC2 (836 aa).

A helical membrane pass occupies residues 1 to 21; that stretch reads MIAELVSSALGLALYLNTLSA. At 22–84 the chain is on the extracellular side; sequence DFCYDDSRAI…LNHAIGGLNP (63 aa). Residues 85 to 105 traverse the membrane as a helical segment; it reads WSYHLVNVLLHAAVTGLFTSF. Residues 106–107 lie on the Cytoplasmic side of the membrane; the sequence is SK. A helical membrane pass occupies residues 108–128; that stretch reads ILLGDGYWTFMAGLMFASHPI. Residues 129 to 132 lie on the Extracellular side of the membrane; it reads HTEA. Residues 133–153 form a helical membrane-spanning segment; it reads VAGIVGRADVGASLFFLLSLL. Residues 154-162 are Cytoplasmic-facing; it reads CYIKHCSTR. The next 2 helical transmembrane spans lie at 163-184 and 185-204; these read GYSA…CSML and WKEQ…VFVF. Residues 205 to 220 lie on the Cytoplasmic side of the membrane; sequence HRLKIKQILPTIYKRK. The chain crosses the membrane as a helical span at residues 221 to 241; it reads NLSLFLSISLLIFWGSSLLGA. Residues 242–312 lie on the Extracellular side of the membrane; it reads RLYWMGNKPP…KTVCDWRNLH (71 aa). The helical transmembrane segment at 313–333 threads the bilayer; sequence TVAFYTGLLLLAYYGLKSPSV. Over 334 to 399 the chain is Cytoplasmic; sequence DRECNGKTVT…TENIVVLSLS (66 aa). The helical transmembrane segment at 400–420 threads the bilayer; it reads LLIIPFVPATNLFFYVGFVIA. Residues 421 to 422 are Extracellular-facing; sequence ER. Residues 423-443 form a helical membrane-spanning segment; that stretch reads VLYIPSMGFCLLITVGARALY. Residues 444-449 lie on the Cytoplasmic side of the membrane; the sequence is VKVQKR. A helical transmembrane segment spans residues 450–470; the sequence is FLKSLIFYATATLIVFYGLKT. Topologically, residues 471–836 are extracellular; that stretch reads AIRNGDWQNE…EKQGLKTSKT (366 aa). TPR repeat units follow at residues 493-526, 527-560, 561-594, 606-639, 643-676, 677-710, 711-744, 745-778, and 779-812; these read AKAW…RSNM, ADML…RPTL, ASAY…PDEN, TSCL…MPRQ, QSLY…KTDH, IPAH…DPTK, GNCY…DSTE, FDVV…RPNY, and PAAL…KPDD.

Belongs to the TMTC family.

The protein localises to the membrane. The protein resides in the endoplasmic reticulum. The enzyme catalyses a di-trans,poly-cis-dolichyl beta-D-mannosyl phosphate + L-seryl-[protein] = 3-O-(alpha-D-mannosyl)-L-seryl-[protein] + a di-trans,poly-cis-dolichyl phosphate + H(+). It carries out the reaction a di-trans,poly-cis-dolichyl beta-D-mannosyl phosphate + L-threonyl-[protein] = 3-O-(alpha-D-mannosyl)-L-threonyl-[protein] + a di-trans,poly-cis-dolichyl phosphate + H(+). It participates in protein modification; protein glycosylation. Its function is as follows. Transfers mannosyl residues to the hydroxyl group of serine or threonine residues. The 4 members of the TMTC family are O-mannosyl-transferases dedicated primarily to the cadherin superfamily, each member seems to have a distinct role in decorating the cadherin domains with O-linked mannose glycans at specific regions. Also acts as O-mannosyl-transferase on other proteins such as PDIA3. In Homo sapiens (Human), this protein is Protein O-mannosyl-transferase TMTC2.